Here is a 723-residue protein sequence, read N- to C-terminus: LPS-assembly protein LptD (723 aa).

The first 23 residues, 1 to 23, serve as a signal peptide directing secretion; it reads MNTLKLCLILYACLVLLPVRVMS.

It belongs to the LptD family. In terms of assembly, component of the lipopolysaccharide transport and assembly complex. Interacts with LptE and LptA.

It localises to the cell outer membrane. In terms of biological role, together with LptE, is involved in the assembly of lipopolysaccharide (LPS) at the surface of the outer membrane. This Nitrosomonas europaea (strain ATCC 19718 / CIP 103999 / KCTC 2705 / NBRC 14298) protein is LPS-assembly protein LptD.